The chain runs to 222 residues: Chalcone--flavanone isomerase 1 (222 aa).

Substrate-binding residues include Thr48, Asn113, and Thr190.

This sequence belongs to the chalcone isomerase family.

It carries out the reaction a chalcone = a flavanone.. It participates in secondary metabolite biosynthesis; flavonoid biosynthesis. Functionally, catalyzes the intramolecular cyclization of bicyclic chalcones into tricyclic (S)-flavanones. Responsible for the isomerization of 4,2',4',6'-tetrahydroxychalcone (also termed chalcone) into naringenin. The chain is Chalcone--flavanone isomerase 1 (CHI1) from Medicago sativa (Alfalfa).